We begin with the raw amino-acid sequence, 669 residues long: DNA mismatch repair protein MutL (669 aa).

Basic and acidic residues predominate over residues 356–371 (FEQRQNTENKQEKTFS). Residues 356 to 379 (FEQRQNTENKQEKTFSSEESNSKP) are disordered.

It belongs to the DNA mismatch repair MutL/HexB family.

In terms of biological role, this protein is involved in the repair of mismatches in DNA. It is required for dam-dependent methyl-directed DNA mismatch repair. May act as a 'molecular matchmaker', a protein that promotes the formation of a stable complex between two or more DNA-binding proteins in an ATP-dependent manner without itself being part of a final effector complex. The protein is DNA mismatch repair protein MutL of Staphylococcus aureus (strain MRSA252).